We begin with the raw amino-acid sequence, 150 residues long: Large ribosomal subunit protein bL9 (150 aa).

This sequence belongs to the bacterial ribosomal protein bL9 family.

In terms of biological role, binds to the 23S rRNA. This Delftia acidovorans (strain DSM 14801 / SPH-1) protein is Large ribosomal subunit protein bL9.